We begin with the raw amino-acid sequence, 163 residues long: MKQKIVEPYAQALFRLKDDIDLTPLWEMARDSKFMQLLMNPSIPKEKKWQLFQPFDKLVQSWLEVIWKKKRMNLLAEICASYLELRKKKEGIVTVFVTSATPLTDTQTQQLEVQLTRMCQAKHLQCEYQVDAQLLAGLKIQMNGQLIDTSWQTQLKQLMKSLW.

This sequence belongs to the ATPase delta chain family. In terms of assembly, F-type ATPases have 2 components, F(1) - the catalytic core - and F(0) - the membrane proton channel. F(1) has five subunits: alpha(3), beta(3), gamma(1), delta(1), epsilon(1). CF(0) has four main subunits: a(1), b(1), b'(1) and c(10-14). The alpha and beta chains form an alternating ring which encloses part of the gamma chain. F(1) is attached to F(0) by a central stalk formed by the gamma and epsilon chains, while a peripheral stalk is formed by the delta, b and b' chains.

Its subcellular location is the plastid. It localises to the chloroplast thylakoid membrane. F(1)F(0) ATP synthase produces ATP from ADP in the presence of a proton or sodium gradient. F-type ATPases consist of two structural domains, F(1) containing the extramembraneous catalytic core and F(0) containing the membrane proton channel, linked together by a central stalk and a peripheral stalk. During catalysis, ATP synthesis in the catalytic domain of F(1) is coupled via a rotary mechanism of the central stalk subunits to proton translocation. Functionally, this protein is part of the stalk that links CF(0) to CF(1). It either transmits conformational changes from CF(0) to CF(1) or is implicated in proton conduction. The chain is ATP synthase subunit delta, chloroplastic from Cyanidioschyzon merolae (strain NIES-3377 / 10D) (Unicellular red alga).